We begin with the raw amino-acid sequence, 381 residues long: Probable peptidoglycan glycosyltransferase FtsW (381 aa).

The next 9 membrane-spanning stretches (helical) occupy residues 16 to 36 (LVLLLMVVALTSFGIVMVYSA), 56 to 76 (LIFALVGCVGALVTMRIDYQL), 80 to 100 (WAVPLLFVSLILLVLVLIPGI), 145 to 165 (LLSAGFLPYMVVLMILLGLLL), 168 to 188 (PDMGAALTLAAVTIIMLFAAG), 191 to 211 (LIFILGSGMVAMPFVVYLVVH), 274 to 294 (VIGEELGFIGVIVIIGMFFIL), 312 to 332 (FLALGIAVLFAIEAVVNMAVV), and 343 to 363 (LPFLSYGGSSLLISLFAVGIL).

Belongs to the SEDS family. FtsW subfamily.

It localises to the cell inner membrane. It carries out the reaction [GlcNAc-(1-&gt;4)-Mur2Ac(oyl-L-Ala-gamma-D-Glu-L-Lys-D-Ala-D-Ala)](n)-di-trans,octa-cis-undecaprenyl diphosphate + beta-D-GlcNAc-(1-&gt;4)-Mur2Ac(oyl-L-Ala-gamma-D-Glu-L-Lys-D-Ala-D-Ala)-di-trans,octa-cis-undecaprenyl diphosphate = [GlcNAc-(1-&gt;4)-Mur2Ac(oyl-L-Ala-gamma-D-Glu-L-Lys-D-Ala-D-Ala)](n+1)-di-trans,octa-cis-undecaprenyl diphosphate + di-trans,octa-cis-undecaprenyl diphosphate + H(+). Its pathway is cell wall biogenesis; peptidoglycan biosynthesis. Its function is as follows. Peptidoglycan polymerase that is essential for cell division. This Trichlorobacter lovleyi (strain ATCC BAA-1151 / DSM 17278 / SZ) (Geobacter lovleyi) protein is Probable peptidoglycan glycosyltransferase FtsW.